Consider the following 466-residue polypeptide: Soluble pyridine nucleotide transhydrogenase (466 aa).

36–45 (ERYQNVGGGC) provides a ligand contact to FAD.

This sequence belongs to the class-I pyridine nucleotide-disulfide oxidoreductase family. It depends on FAD as a cofactor.

It is found in the cytoplasm. It carries out the reaction NAD(+) + NADPH = NADH + NADP(+). In terms of biological role, conversion of NADPH, generated by peripheral catabolic pathways, to NADH, which can enter the respiratory chain for energy generation. This is Soluble pyridine nucleotide transhydrogenase from Shigella boydii serotype 18 (strain CDC 3083-94 / BS512).